We begin with the raw amino-acid sequence, 356 residues long: MRRELLLEKIETYKAIMPWYVLDYYQSKLAIPYSFTTLYEYLKEYKRFFDWLMDADLTQAPKIADIDLSTLEHLTKKDLEAFVLYLRERPSLNTYSTKEGLSQTTINRTLSALSSLYKYLTEEVENDQGEPYFYRNVMKKVSTKKKKETLASRAENIKQKLFLGDETLAFLDYVDKEYEQKLSNRAKSSFRKNKERDLAIIALLLASGVRLSEAVNLDLKDVNLNMMIIEVIRKGGKRDSVNVAGFAKGYLESYLAVRQRRYKAEKQDLAFFLTEYRGVPNRMDASSIEKMVGKYSEDFKIRVTPHKLRHTLATRLYDATKSQVLVSHQLGHSSTQVTDLYTHIVNDEQKNALDNL.

The Core-binding (CB) domain occupies 16 to 121 (IMPWYVLDYY…ALSSLYKYLT (106 aa)). A Tyr recombinase domain is found at 169-354 (AFLDYVDKEY…VNDEQKNALD (186 aa)). Active-site residues include Arg-210, Lys-234, His-306, Arg-309, and His-332. Tyr-341 (O-(3'-phospho-DNA)-tyrosine intermediate) is an active-site residue.

It belongs to the 'phage' integrase family. XerS subfamily.

The protein localises to the cytoplasm. Its activity is regulated as follows. FtsK is required for recombination. Site-specific tyrosine recombinase, which acts by catalyzing the cutting and rejoining of the recombining DNA molecules. Essential to convert dimers of the bacterial chromosome into monomers to permit their segregation at cell division. This chain is Tyrosine recombinase XerS, found in Streptococcus pyogenes serotype M18 (strain MGAS8232).